Here is a 245-residue protein sequence, read N- to C-terminus: Carbohydrate deacetylase 1 (245 aa).

Residues His59 and His125 each contribute to the Mg(2+) site.

Belongs to the YdjC deacetylase family. Homodimer. Mg(2+) serves as cofactor.

Probably catalyzes the deacetylation of acetylated carbohydrates an important step in the degradation of oligosaccharides. The chain is Carbohydrate deacetylase 1 from Listeria innocua serovar 6a (strain ATCC BAA-680 / CLIP 11262).